The chain runs to 324 residues: Endochitinase B (324 aa).

The first 23 residues, 1-23 (MRLREFTALSSLLFSLLLLSASA), serve as a signal peptide directing secretion. The region spanning 24-65 (EQCGSQAGGARCASGLCCSKFGWCGNTNDYCGPGNCQSQCPG) is the Chitin-binding type-1 domain. 4 disulfide bridges follow: C26-C41, C35-C47, C40-C54, and C59-C63. 2 positions are modified to 4-hydroxyproline: P67 and P69. 3 disulfide bridges follow: C96–C158, C170–C178, and C277–C309. The Proton donor role is filled by E140. Positions 318–324 (GLLVDTM) are cleaved as a propeptide — removed in mature form.

This sequence belongs to the glycosyl hydrolase 19 family. Chitinase class I subfamily. The 4-hydroxyproline residues are not glycosylated in this plant vacuolar protein.

The protein localises to the vacuole. It carries out the reaction Random endo-hydrolysis of N-acetyl-beta-D-glucosaminide (1-&gt;4)-beta-linkages in chitin and chitodextrins.. Its function is as follows. Defense against chitin-containing fungal pathogens. The sequence is that of Endochitinase B (CHN50) from Nicotiana tabacum (Common tobacco).